A 257-amino-acid polypeptide reads, in one-letter code: Imidazole glycerol phosphate synthase subunit HisF (257 aa).

Residues aspartate 11 and aspartate 130 contribute to the active site.

Belongs to the HisA/HisF family. Heterodimer of HisH and HisF.

It localises to the cytoplasm. It carries out the reaction 5-[(5-phospho-1-deoxy-D-ribulos-1-ylimino)methylamino]-1-(5-phospho-beta-D-ribosyl)imidazole-4-carboxamide + L-glutamine = D-erythro-1-(imidazol-4-yl)glycerol 3-phosphate + 5-amino-1-(5-phospho-beta-D-ribosyl)imidazole-4-carboxamide + L-glutamate + H(+). It functions in the pathway amino-acid biosynthesis; L-histidine biosynthesis; L-histidine from 5-phospho-alpha-D-ribose 1-diphosphate: step 5/9. Its function is as follows. IGPS catalyzes the conversion of PRFAR and glutamine to IGP, AICAR and glutamate. The HisF subunit catalyzes the cyclization activity that produces IGP and AICAR from PRFAR using the ammonia provided by the HisH subunit. The chain is Imidazole glycerol phosphate synthase subunit HisF from Pseudoalteromonas atlantica (strain T6c / ATCC BAA-1087).